Consider the following 138-residue polypeptide: Nucleoside diphosphate kinase (138 aa).

K10, F58, R86, T92, R103, and N113 together coordinate ATP. H116 acts as the Pros-phosphohistidine intermediate in catalysis.

It belongs to the NDK family. In terms of assembly, homotetramer. Mg(2+) serves as cofactor.

It localises to the cytoplasm. It catalyses the reaction a 2'-deoxyribonucleoside 5'-diphosphate + ATP = a 2'-deoxyribonucleoside 5'-triphosphate + ADP. It carries out the reaction a ribonucleoside 5'-diphosphate + ATP = a ribonucleoside 5'-triphosphate + ADP. Functionally, major role in the synthesis of nucleoside triphosphates other than ATP. The ATP gamma phosphate is transferred to the NDP beta phosphate via a ping-pong mechanism, using a phosphorylated active-site intermediate. This is Nucleoside diphosphate kinase from Glaesserella parasuis serovar 5 (strain SH0165) (Haemophilus parasuis).